The chain runs to 136 residues: Large ribosomal subunit protein uL16 (136 aa).

Belongs to the universal ribosomal protein uL16 family. Part of the 50S ribosomal subunit.

Functionally, binds 23S rRNA and is also seen to make contacts with the A and possibly P site tRNAs. This is Large ribosomal subunit protein uL16 from Shewanella woodyi (strain ATCC 51908 / MS32).